The primary structure comprises 282 residues: Energy-coupling factor transporter ATP-binding protein EcfA2 (282 aa).

In terms of domain architecture, ABC transporter spans 1 to 234 (MKGSPFEKVA…ADELVALGLD (234 aa)). 28–35 (GHTGSGKS) serves as a coordination point for ATP.

Belongs to the ABC transporter superfamily. Energy-coupling factor EcfA family. Forms a stable energy-coupling factor (ECF) transporter complex composed of 2 membrane-embedded substrate-binding proteins (S component), 2 ATP-binding proteins (A component) and 2 transmembrane proteins (T component).

The protein localises to the cell membrane. In terms of biological role, ATP-binding (A) component of a common energy-coupling factor (ECF) ABC-transporter complex. Unlike classic ABC transporters this ECF transporter provides the energy necessary to transport a number of different substrates. This chain is Energy-coupling factor transporter ATP-binding protein EcfA2, found in Halalkalibacterium halodurans (strain ATCC BAA-125 / DSM 18197 / FERM 7344 / JCM 9153 / C-125) (Bacillus halodurans).